Reading from the N-terminus, the 188-residue chain is MGTIADDILDDLHGRILKTLDQLRTELAAVRTGRASLHLLDNVRVDYYGTPTPLNQVATLSVPEARLIVVKPWEKSMIPPIEKAIRDGNLGLNPMSDKDLVRVPIPALTEERRKEIVKQVKHKGEEHKIAVRNVRREAKELIEVAEKDGDISGDDAEKALEKMQKETDDGVKKIDEIVAAKEKDVLQV.

This sequence belongs to the RRF family.

Its subcellular location is the cytoplasm. In terms of biological role, responsible for the release of ribosomes from messenger RNA at the termination of protein biosynthesis. May increase the efficiency of translation by recycling ribosomes from one round of translation to another. The sequence is that of Ribosome-recycling factor from Anaeromyxobacter dehalogenans (strain 2CP-1 / ATCC BAA-258).